Consider the following 522-residue polypeptide: Glucose-1-phosphate adenylyltransferase large subunit 1, chloroplastic (522 aa).

The N-terminal 54 residues, 1–54, are a transit peptide targeting the chloroplast; sequence MVVSADCRISLSAPSCIRSSSTGLTRHIKLGSFCNGELMGKKLNLSQLPNIRLR. At serine 428 the chain carries Phosphoserine.

It belongs to the bacterial/plant glucose-1-phosphate adenylyltransferase family. Heterotetramer. In terms of tissue distribution, leaves.

The protein resides in the plastid. It localises to the chloroplast. It catalyses the reaction alpha-D-glucose 1-phosphate + ATP + H(+) = ADP-alpha-D-glucose + diphosphate. Its pathway is glycan biosynthesis; starch biosynthesis. Its activity is regulated as follows. Activated by 3'phosphoglycerate, inhibited by orthophosphate. Allosteric regulation. Functionally, this protein plays a role in synthesis of starch. It catalyzes the synthesis of the activated glycosyl donor, ADP-glucose from Glc-1-P and ATP. This is Glucose-1-phosphate adenylyltransferase large subunit 1, chloroplastic (ADG2) from Arabidopsis thaliana (Mouse-ear cress).